A 266-amino-acid chain; its full sequence is MNWGFLQGILSGVNKYSTALGRIWLSVVFIFRVLVYVVAAEEVWDDDQKDFICNTKQPGCPNVCYDEFFPVSHVRLWALQLILVTCPSLLVVMHVAYREERERKHRLKHGPNAPALYSNLSKKRGGLWWTYLLSLIFKAAVDSGFLYIFHCIYKDYDMPRVVACSVTPCPHTVDCYIARPTEKKVFTYFMVVTAAICILLNLSEVVYLVGKRCMEVFRPRRRKASRRHQLPDTCPPYVISKGGHPQDESVILTKAGMATVDAGVYP.

An intramembrane segment occupies 2 to 13; it reads NWGFLQGILSGV. Over 14–20 the chain is Cytoplasmic; that stretch reads NKYSTAL. Residues 21–40 form a helical membrane-spanning segment; sequence GRIWLSVVFIFRVLVYVVAA. Topologically, residues 41-73 are extracellular; it reads EEVWDDDQKDFICNTKQPGCPNVCYDEFFPVSH. 3 disulfides stabilise this stretch: Cys53–Cys175, Cys60–Cys169, and Cys64–Cys164. The chain crosses the membrane as a helical span at residues 74–94; that stretch reads VRLWALQLILVTCPSLLVVMH. Residues 95–130 are Cytoplasmic-facing; the sequence is VAYREERERKHRLKHGPNAPALYSNLSKKRGGLWWT. Residues 131-151 form a helical membrane-spanning segment; sequence YLLSLIFKAAVDSGFLYIFHC. The Extracellular segment spans residues 152–184; the sequence is IYKDYDMPRVVACSVTPCPHTVDCYIARPTEKK. The helical transmembrane segment at 185-205 threads the bilayer; it reads VFTYFMVVTAAICILLNLSEV. Residues 206–266 are Cytoplasmic-facing; that stretch reads VYLVGKRCME…MATVDAGVYP (61 aa).

The protein belongs to the connexin family. Beta-type (group I) subfamily. A hemichannel or connexon is composed of a hexamer of connexins. A functional gap junction is formed by the apposition of two hemichannels. Forms heteromeric channels with GJB2. In terms of tissue distribution, detected in cochlea (at protein level). Detected in cochlea. Expressed in skin.

The protein resides in the cell membrane. It is found in the cell junction. The protein localises to the gap junction. Structural component of gap junctions. Gap junctions are dodecameric channels that connect the cytoplasm of adjoining cells. They are formed by the docking of two hexameric hemichannels, one from each cell membrane. Small molecules and ions diffuse from one cell to a neighboring cell via the central pore. The protein is Gap junction beta-4 protein (Gjb4) of Mus musculus (Mouse).